Consider the following 320-residue polypeptide: Tetraspanin-32 (320 aa).

4 helical membrane-spanning segments follow: residues 14-34 (MLVT…MVTL), 60-80 (WAFS…VLSA), 90-110 (LMAG…QVVF), and 203-223 (SIGL…WFAI).

This sequence belongs to the tetraspanin (TM4SF) family. As to expression, expressed ubiquitously at low levels. High levels of expression are confined to hematopoietic tissues including peripheral blood leukocytes, thymus and spleen.

The protein localises to the membrane. This is Tetraspanin-32 (TSPAN32) from Homo sapiens (Human).